We begin with the raw amino-acid sequence, 365 residues long: Carbamoyl phosphate synthase small chain (365 aa).

CPSase regions lie at residues 1-166 and 1-169; these read MKRQ…PSPG and MKRQ…GRGH. Positions 45, 218, and 220 each coordinate L-glutamine. In terms of domain architecture, Glutamine amidotransferase type-1 spans 170 to 357; sequence RVVLVDFGMK…LTMIENFKKE (188 aa). Cys245 (nucleophile) is an active-site residue. Residues Leu246, Gln249, Asn287, Gly289, and Tyr290 each contribute to the L-glutamine site. Active-site residues include His330 and Glu332.

The protein belongs to the CarA family. As to quaternary structure, composed of two chains; the small (or glutamine) chain promotes the hydrolysis of glutamine to ammonia, which is used by the large (or ammonia) chain to synthesize carbamoyl phosphate. Tetramer of heterodimers (alpha,beta)4.

It catalyses the reaction hydrogencarbonate + L-glutamine + 2 ATP + H2O = carbamoyl phosphate + L-glutamate + 2 ADP + phosphate + 2 H(+). The catalysed reaction is L-glutamine + H2O = L-glutamate + NH4(+). The protein operates within amino-acid biosynthesis; L-arginine biosynthesis; carbamoyl phosphate from bicarbonate: step 1/1. Its pathway is pyrimidine metabolism; UMP biosynthesis via de novo pathway; (S)-dihydroorotate from bicarbonate: step 1/3. Its function is as follows. Small subunit of the glutamine-dependent carbamoyl phosphate synthetase (CPSase). CPSase catalyzes the formation of carbamoyl phosphate from the ammonia moiety of glutamine, carbonate, and phosphate donated by ATP, constituting the first step of 2 biosynthetic pathways, one leading to arginine and/or urea and the other to pyrimidine nucleotides. The small subunit (glutamine amidotransferase) binds and cleaves glutamine to supply the large subunit with the substrate ammonia. The protein is Carbamoyl phosphate synthase small chain of Bacillus cereus (strain ATCC 10987 / NRS 248).